Consider the following 267-residue polypeptide: Coiled-coil domain-containing protein 172 (267 aa).

Coiled coils occupy residues 24–97 and 128–191; these read MREV…CEAI and LMKE…EETE.

It belongs to the CCDC172 family. May interact with TEKT2.

It localises to the cytoplasm. The protein resides in the cell projection. The protein localises to the cilium. This chain is Coiled-coil domain-containing protein 172 (Ccdc172), found in Mus musculus (Mouse).